A 434-amino-acid chain; its full sequence is UPF0597 protein CLD_2616 (434 aa).

It belongs to the UPF0597 family.

In Clostridium botulinum (strain Okra / Type B1), this protein is UPF0597 protein CLD_2616.